Consider the following 345-residue polypeptide: 3-isopropylmalate dehydrogenase (345 aa).

74–87 (GPKWDGLPRKISPE) is an NAD(+) binding site. The substrate site is built by R94, R104, R132, and D217. The Mg(2+) site is built by D217, D241, and D245. 274 to 286 (GSAPDIAGKGIAN) lines the NAD(+) pocket.

It belongs to the isocitrate and isopropylmalate dehydrogenases family. LeuB type 1 subfamily. In terms of assembly, homodimer. Requires Mg(2+) as cofactor. Mn(2+) serves as cofactor.

The protein resides in the cytoplasm. It carries out the reaction (2R,3S)-3-isopropylmalate + NAD(+) = 4-methyl-2-oxopentanoate + CO2 + NADH. Its pathway is amino-acid biosynthesis; L-leucine biosynthesis; L-leucine from 3-methyl-2-oxobutanoate: step 3/4. Catalyzes the oxidation of 3-carboxy-2-hydroxy-4-methylpentanoate (3-isopropylmalate) to 3-carboxy-4-methyl-2-oxopentanoate. The product decarboxylates to 4-methyl-2 oxopentanoate. The chain is 3-isopropylmalate dehydrogenase (leuB) from Thermus thermophilus.